The sequence spans 675 residues: Pesticidal crystal protein Cry25Aa (675 aa).

The protein belongs to the delta endotoxin family.

In terms of biological role, promotes colloidosmotic lysis by binding to the midgut epithelial cells of insects. The protein is Pesticidal crystal protein Cry25Aa (cry25Aa) of Bacillus thuringiensis subsp. jegathesan.